The following is a 254-amino-acid chain: Probable transcriptional regulatory protein Saro_0419 (254 aa).

Basic residues predominate over residues 1-14 (MAGHSKFKNIMHRK). The tract at residues 1 to 22 (MAGHSKFKNIMHRKGAQDKKRS) is disordered.

This sequence belongs to the TACO1 family.

Its subcellular location is the cytoplasm. This chain is Probable transcriptional regulatory protein Saro_0419, found in Novosphingobium aromaticivorans (strain ATCC 700278 / DSM 12444 / CCUG 56034 / CIP 105152 / NBRC 16084 / F199).